Here is a 344-residue protein sequence, read N- to C-terminus: MIRAGIVGGTGYTGVELLRLLLPHPEVELVAITSRAEAGQRVDEHFPNLRGHCNLSYTAPDPAILGTLDVVFFATPHGVAMDSAPKLLAEGVRIIDLGADFRLPDAEVFAQWYGMAHRAPEVLGEACYGLPEYYRTKISEARLIANPGCYPTAVILGLAPLLAEGLLQEDTLIADCKSGVSGAGRSAKVGLILPETADSVSAYGVGGHRHRPEIEAVLSDISGTPLELQFTPHLMPMIRGIHATLYGRLAQPMSDAALQDLFATRYASEPFVDVLPFGSHPATRSVRGANMCLIAVHQPRPGQVVVLSVIDNLVKGAAGQAIQNMNRLFSLAEDAGLMQIALLP.

Residue cysteine 149 is part of the active site.

Belongs to the NAGSA dehydrogenase family. Type 1 subfamily.

It localises to the cytoplasm. It catalyses the reaction N-acetyl-L-glutamate 5-semialdehyde + phosphate + NADP(+) = N-acetyl-L-glutamyl 5-phosphate + NADPH + H(+). It functions in the pathway amino-acid biosynthesis; L-arginine biosynthesis; N(2)-acetyl-L-ornithine from L-glutamate: step 3/4. Its function is as follows. Catalyzes the NADPH-dependent reduction of N-acetyl-5-glutamyl phosphate to yield N-acetyl-L-glutamate 5-semialdehyde. This Acidithiobacillus ferrooxidans (strain ATCC 23270 / DSM 14882 / CIP 104768 / NCIMB 8455) (Ferrobacillus ferrooxidans (strain ATCC 23270)) protein is N-acetyl-gamma-glutamyl-phosphate reductase.